A 523-amino-acid chain; its full sequence is NAD(P)H-quinone oxidoreductase subunit 2 (523 aa).

Transmembrane regions (helical) follow at residues 29-49 (AIAPEGAVLVAMLATLLVDLA), 57-77 (WVPPICYAGLGTALVLLAQQW), 94-114 (LAIAFRAVVALSTLLSLLISW), 123-143 (PIGEYAAILLAATLGAMLLCG), 147-167 (LVSVFVSLETLSVASYLLAGY), 182-202 (LLVGSAAAAVFLYGASLLYGL), 221-243 (PLAALSLVFVLATVAFKIAAVPF), 255-275 (PTPVVAFLSVGSKAAGFALAL), 291-311 (LLFTVLAVLSMTLGNVVALAQ), 317-337 (MLAYSSIGQAGFVMIGLVCGT), 345-365 (VLYMAAYLFMNLGAFACIILF), 389-409 (LGLSLCLLSLGGIPPMLGFFG), 424-444 (LLVVVGLVTSVVSIYYYISVI), and 477-497 (IALVGCVVVTAVGGILSNPLF).

Belongs to the complex I subunit 2 family. In terms of assembly, NDH-1 can be composed of about 15 different subunits; different subcomplexes with different compositions have been identified which probably have different functions.

It is found in the cellular thylakoid membrane. It catalyses the reaction a plastoquinone + NADH + (n+1) H(+)(in) = a plastoquinol + NAD(+) + n H(+)(out). It carries out the reaction a plastoquinone + NADPH + (n+1) H(+)(in) = a plastoquinol + NADP(+) + n H(+)(out). Its function is as follows. NDH-1 shuttles electrons from an unknown electron donor, via FMN and iron-sulfur (Fe-S) centers, to quinones in the respiratory and/or the photosynthetic chain. The immediate electron acceptor for the enzyme in this species is believed to be plastoquinone. Couples the redox reaction to proton translocation, and thus conserves the redox energy in a proton gradient. Cyanobacterial NDH-1 also plays a role in inorganic carbon-concentration. The polypeptide is NAD(P)H-quinone oxidoreductase subunit 2 (Prochlorococcus marinus (strain MIT 9303)).